The following is a 340-amino-acid chain: Dihydroorotate dehydrogenase (quinone) (340 aa).

Residues 63 to 67 (AGLDK) and Thr-87 each bind FMN. Lys-67 contacts substrate. 112-116 (NRMGF) provides a ligand contact to substrate. FMN-binding residues include Asn-140 and Asn-173. Asn-173 lines the substrate pocket. Ser-176 acts as the Nucleophile in catalysis. Asn-178 contacts substrate. Lys-218 and Thr-246 together coordinate FMN. 247–248 (NT) is a substrate binding site. Residues Gly-269, Gly-298, and 319–320 (YT) each bind FMN.

This sequence belongs to the dihydroorotate dehydrogenase family. Type 2 subfamily. As to quaternary structure, monomer. FMN is required as a cofactor.

The protein resides in the cell membrane. It catalyses the reaction (S)-dihydroorotate + a quinone = orotate + a quinol. It participates in pyrimidine metabolism; UMP biosynthesis via de novo pathway; orotate from (S)-dihydroorotate (quinone route): step 1/1. Functionally, catalyzes the conversion of dihydroorotate to orotate with quinone as electron acceptor. This Methylococcus capsulatus (strain ATCC 33009 / NCIMB 11132 / Bath) protein is Dihydroorotate dehydrogenase (quinone).